The following is a 351-amino-acid chain: Probable E3 ubiquitin-protein ligase sinah (351 aa).

The tract at residues 1-38 (MSVRNSRPQLSWPERVSPQRTIDTPTASGEMLTRRQSA) is disordered. A compositionally biased stretch (polar residues) spans 18 to 27 (PQRTIDTPTA). The segment at 106 to 141 (CPVCFGYIMPPIMQCPRGHLICSTCRSKLTICPVCR) adopts an RING-type zinc-finger fold. The segment at 155-346 (VASKLIFPCK…LALNVVIRKV (192 aa)) is SBD. An SIAH-type zinc finger spans residues 158-218 (KLIFPCKHSH…VYQHLMSSHE (61 aa)). Residues C163, C170, H182, C186, C193, C200, H212, and H217 each contribute to the Zn(2+) site.

It belongs to the SINA (Seven in absentia) family. As to quaternary structure, interacts with ebi and phyl.

The catalysed reaction is S-ubiquitinyl-[E2 ubiquitin-conjugating enzyme]-L-cysteine + [acceptor protein]-L-lysine = [E2 ubiquitin-conjugating enzyme]-L-cysteine + N(6)-ubiquitinyl-[acceptor protein]-L-lysine.. Its pathway is protein modification; protein ubiquitination. Functionally, E3 ubiquitin-protein ligase that mediates ubiquitination and subsequent proteasomal degradation of target proteins. The adapter phyl is required to direct the degradation of the two isoforms of the transcriptional repressor Tramtrack (Ttk). E3 ubiquitin ligases accept ubiquitin from an E2 ubiquitin-conjugating enzyme in the form of a thioester and then directly transfers the ubiquitin to targeted substrates. It probably triggers the ubiquitin-mediated degradation of different substrates. A phyl-independent mechanism of degradation exists for isoform beta of ttk that involves motifs in the C-terminus of ttk. In Drosophila melanogaster (Fruit fly), this protein is Probable E3 ubiquitin-protein ligase sinah (sinah).